The following is a 492-amino-acid chain: Solute carrier family 2, facilitated glucose transporter member 1 (492 aa).

The residue at position 1 (Met1) is an N-acetylmethionine. The Cytoplasmic portion of the chain corresponds to 1 to 11 (MEPSSKKVTGR). Residues 12 to 33 (LMLAVGGAVLGSLQFGYNTGVI) traverse the membrane as a helical segment. The Extracellular segment spans residues 34 to 66 (NAPQKVIEEFYNQTWNHRYGESIPSTTLTTLWS). Residue Asn45 is glycosylated (N-linked (GlcNAc...) asparagine). The helical transmembrane segment at 67–87 (LSVAIFSVGGMIGSFSVGLFV) threads the bilayer. The Cytoplasmic segment spans residues 88-90 (NRF). A helical transmembrane segment spans residues 91–112 (GRRNSMLMMNLLAFVSAVLMGF). Over 113 to 120 (SKLGKSFE) the chain is Extracellular. Residues 121–144 (MLILGRFIIGVYCGLTTGFVPMYV) traverse the membrane as a helical segment. At 145-155 (GEVSPTALRGA) the chain is on the cytoplasmic side. Residues 156–176 (LGTLHQLGIVVGILIAQVFGL) form a helical membrane-spanning segment. Residue Gln161 coordinates D-glucose. Topologically, residues 177 to 185 (DSIMGNADL) are extracellular. The helical transmembrane segment at 186–206 (WPLLLSVIFIPALLQCILLPF) threads the bilayer. The Cytoplasmic segment spans residues 207–271 (CPESPRFLLI…LFRSPAYRQP (65 aa)). Residue Ser226 is modified to Phosphoserine. Residues 272–293 (ILIAVVLQLSQQLSGINAVFYY) traverse the membrane as a helical segment. D-glucose contacts are provided by residues 282–283 (QQ) and Asn288. Over 294–306 (STSIFEKAGVQQP) the chain is Extracellular. The chain crosses the membrane as a helical span at residues 307–328 (VYATIGSGIVNTAFTVVSLFVV). Asn317 lines the D-glucose pocket. Over 329 to 334 (ERAGRR) the chain is Cytoplasmic. A helical transmembrane segment spans residues 335-355 (TLHLIGLAGMAGCAVLMTIAL). Residues 356–365 (ALLEQLPWMS) are Extracellular-facing. Residues 366–388 (YLSIVAIFGFVAFFEVGPGPIPW) traverse the membrane as a helical segment. Residues Glu380 and Trp388 each contribute to the D-glucose site. The Cytoplasmic portion of the chain corresponds to 389-401 (FIVAELFSQGPRP). The helical transmembrane segment at 402 to 422 (AAVAVAGFSNWTSNFIVGMCF) threads the bilayer. Over 423–429 (QYVEQLC) the chain is Extracellular. A helical membrane pass occupies residues 430–450 (GPYVFIIFTVLLVLFFIFTYF). At 451-492 (KVPETKGRTFDEIASGFRQGGASQSDKTPEELFHPLGADSQV) the chain is on the cytoplasmic side. Residue Ser465 is modified to Phosphoserine. Positions 468 to 492 (RQGGASQSDKTPEELFHPLGADSQV) are disordered. Thr478 bears the Phosphothreonine mark. Ser490 is subject to Phosphoserine.

It belongs to the major facilitator superfamily. Sugar transporter (TC 2.A.1.1) family. Glucose transporter subfamily. In terms of assembly, found in a complex with ADD2, DMTN and SLC2A1. Interacts (via C-terminus cytoplasmic region) with DMTN. Interacts with SNX27; the interaction is required when endocytosed to prevent degradation in lysosomes and promote recycling to the plasma membrane. Interacts with STOM. Interacts with GIPC (via PDZ domain). Interacts with SGTA (via Gln-rich region). Interacts with isoform 1 of BSG. Interacts with SMIM43; the interaction may promote SLC2A1-mediated glucose transport to meet the energy needs of mesendoderm differentiation. In terms of processing, phosphorylation at Ser-226 by PKC promotes glucose uptake by increasing cell membrane localization. Detected in osteoblastic cells (at protein level). Detected in brain, and at lower levels in kidney, heart and lung.

The protein resides in the cell membrane. Its subcellular location is the photoreceptor inner segment. It catalyses the reaction D-glucose(out) = D-glucose(in). The uptake of glucose is inhibited by cytochalasin B. Glucose uptake is increased in response to phorbol ester 12-O-tetradecanoylphorbol-13-acetate (TPA) treatment: TPA-induced glucose uptake requires phosphorylation at Ser-226. Functionally, facilitative glucose transporter, which is responsible for constitutive or basal glucose uptake. Has a very broad substrate specificity; can transport a wide range of aldoses including both pentoses and hexoses. Most important energy carrier of the brain: present at the blood-brain barrier and assures the energy-independent, facilitative transport of glucose into the brain. In association with BSG and NXNL1, promotes retinal cone survival by increasing glucose uptake into photoreceptors. Required for mesendoderm differentiation. The sequence is that of Solute carrier family 2, facilitated glucose transporter member 1 from Rattus norvegicus (Rat).